The chain runs to 330 residues: tRNA U34 carboxymethyltransferase (330 aa).

Residues K98, W112, K117, G137, 187–188 (ME), M203, Y207, and R322 each bind carboxy-S-adenosyl-L-methionine. The interval 309–330 (NPSKTIEGYPGPKRATLIAEKP) is disordered.

The protein belongs to the class I-like SAM-binding methyltransferase superfamily. CmoB family. Homotetramer.

It catalyses the reaction carboxy-S-adenosyl-L-methionine + 5-hydroxyuridine(34) in tRNA = 5-carboxymethoxyuridine(34) in tRNA + S-adenosyl-L-homocysteine + H(+). Its function is as follows. Catalyzes carboxymethyl transfer from carboxy-S-adenosyl-L-methionine (Cx-SAM) to 5-hydroxyuridine (ho5U) to form 5-carboxymethoxyuridine (cmo5U) at position 34 in tRNAs. The chain is tRNA U34 carboxymethyltransferase from Marinobacter nauticus (strain ATCC 700491 / DSM 11845 / VT8) (Marinobacter aquaeolei).